Here is a 367-residue protein sequence, read N- to C-terminus: Alanine racemase (367 aa).

K40 (proton acceptor; specific for D-alanine) is an active-site residue. K40 is subject to N6-(pyridoxal phosphate)lysine. R136 contributes to the substrate binding site. Y263 acts as the Proton acceptor; specific for L-alanine in catalysis. M310 contacts substrate.

It belongs to the alanine racemase family. Pyridoxal 5'-phosphate serves as cofactor.

The enzyme catalyses L-alanine = D-alanine. Its pathway is amino-acid biosynthesis; D-alanine biosynthesis; D-alanine from L-alanine: step 1/1. Its function is as follows. Catalyzes the interconversion of L-alanine and D-alanine. May also act on other amino acids. This chain is Alanine racemase (alr), found in Lactococcus lactis subsp. cremoris (strain SK11).